A 73-amino-acid polypeptide reads, in one-letter code: Putative membrane protein insertion efficiency factor (73 aa).

The protein belongs to the UPF0161 family.

The protein localises to the cell inner membrane. Its function is as follows. Could be involved in insertion of integral membrane proteins into the membrane. The protein is Putative membrane protein insertion efficiency factor of Neisseria meningitidis serogroup C (strain 053442).